The chain runs to 265 residues: MRTLKKFSLRDLAYNAAYPFYEKRLMREIQGVRQPEHVAIMCDGNRRWAREAGFADVTHGHRVGAKKIGEMVRWCAHTDVELVTVYLLSTENLGRASDELQMLFDIIGDVVDELASPETNCRLRLVGHLDLLPDDVSRRLTQAQDSTNDNTGVFVNVAVGYGGRQEIVDAVRELIDAEAAAGTTATEMAEKISVDSISKHLYTSGQPDPDLVIRTSGEQRLSGFLLWQAAYSEIWFTDTYWPAFRRVDFLRALREYSKRSRRFGK.

The active site involves Asp-43. Asp-43 is a binding site for Mg(2+). Substrate is bound by residues 44 to 47, Trp-48, His-61, and 89 to 91; these read GNRR and STE. Asn-92 acts as the Proton acceptor in catalysis. Substrate contacts are provided by residues Arg-95, Arg-214, and 220–222; that span reads RLS. Glu-233 contacts Mg(2+).

This sequence belongs to the UPP synthase family. In terms of assembly, homodimer. It depends on Mg(2+) as a cofactor.

Its function is as follows. Catalyzes the condensation of isopentenyl diphosphate (IPP) with allylic pyrophosphates generating different type of terpenoids. This Corynebacterium diphtheriae (strain ATCC 700971 / NCTC 13129 / Biotype gravis) protein is Isoprenyl transferase 1.